The following is a 161-amino-acid chain: Regulator of ribonuclease activity A (161 aa).

The protein belongs to the RraA family. Homotrimer. Binds to both RNA-binding sites in the C-terminal region of Rne and to RhlB.

It is found in the cytoplasm. Its function is as follows. Globally modulates RNA abundance by binding to RNase E (Rne) and regulating its endonucleolytic activity. Can modulate Rne action in a substrate-dependent manner by altering the composition of the degradosome. Modulates RNA-binding and helicase activities of the degradosome. The protein is Regulator of ribonuclease activity A of Shigella dysenteriae serotype 1 (strain Sd197).